The sequence spans 116 residues: uncharacterized protein (116 aa).

The chain crosses the membrane as a helical span at residues 22–42 (LIFLVVNLKVPAVGLELFLLV).

Its subcellular location is the membrane. This is an uncharacterized protein from Saccharomyces cerevisiae (strain ATCC 204508 / S288c) (Baker's yeast).